Consider the following 542-residue polypeptide: Apolipoprotein N-acyltransferase (542 aa).

Helical transmembrane passes span 26–46, 54–74, 89–109, 113–133, 163–183, and 187–207; these read ASVI…LSLV, IWCL…SWML, LLIS…VLCF, YWGA…VRYY, WAGQ…VLVF, and FSYG…GTYY. The CN hydrolase domain maps to 220–499; sequence LRVAIVQPGY…PDVLQVSVPV (280 aa). E264 acts as the Proton acceptor in catalysis. K349 is a catalytic residue. The active-site Nucleophile is the C404. The chain crosses the membrane as a helical span at residues 509-529; it reads FGDAPLLFVAVSSVLGVVGYF.

Belongs to the CN hydrolase family. Apolipoprotein N-acyltransferase subfamily.

It localises to the cell inner membrane. The enzyme catalyses N-terminal S-1,2-diacyl-sn-glyceryl-L-cysteinyl-[lipoprotein] + a glycerophospholipid = N-acyl-S-1,2-diacyl-sn-glyceryl-L-cysteinyl-[lipoprotein] + a 2-acyl-sn-glycero-3-phospholipid + H(+). It participates in protein modification; lipoprotein biosynthesis (N-acyl transfer). Its function is as follows. Catalyzes the phospholipid dependent N-acylation of the N-terminal cysteine of apolipoprotein, the last step in lipoprotein maturation. The protein is Apolipoprotein N-acyltransferase of Chlamydia muridarum (strain MoPn / Nigg).